A 273-amino-acid polypeptide reads, in one-letter code: Formamidopyrimidine-DNA glycosylase (273 aa).

Pro-2 serves as the catalytic Schiff-base intermediate with DNA. The active-site Proton donor is Glu-3. The Proton donor; for beta-elimination activity role is filled by Lys-59. DNA contacts are provided by His-92 and Arg-111. The FPG-type zinc-finger motif lies at 239-273; sequence KVYGKTDEPCVVCGKPIEKIKLNGRGTHFCPNCQK. Arg-263 serves as the catalytic Proton donor; for delta-elimination activity.

The protein belongs to the FPG family. As to quaternary structure, monomer. The cofactor is Zn(2+).

The catalysed reaction is Hydrolysis of DNA containing ring-opened 7-methylguanine residues, releasing 2,6-diamino-4-hydroxy-5-(N-methyl)formamidopyrimidine.. The enzyme catalyses 2'-deoxyribonucleotide-(2'-deoxyribose 5'-phosphate)-2'-deoxyribonucleotide-DNA = a 3'-end 2'-deoxyribonucleotide-(2,3-dehydro-2,3-deoxyribose 5'-phosphate)-DNA + a 5'-end 5'-phospho-2'-deoxyribonucleoside-DNA + H(+). Its function is as follows. Involved in base excision repair of DNA damaged by oxidation or by mutagenic agents. Acts as a DNA glycosylase that recognizes and removes damaged bases. Has a preference for oxidized purines, such as 7,8-dihydro-8-oxoguanine (8-oxoG). Has AP (apurinic/apyrimidinic) lyase activity and introduces nicks in the DNA strand. Cleaves the DNA backbone by beta-delta elimination to generate a single-strand break at the site of the removed base with both 3'- and 5'-phosphates. In Listeria monocytogenes serotype 4b (strain F2365), this protein is Formamidopyrimidine-DNA glycosylase.